The chain runs to 325 residues: Tetraacyldisaccharide 4'-kinase (325 aa).

51-58 is an ATP binding site; the sequence is VVGGAGKT.

It belongs to the LpxK family.

It catalyses the reaction a lipid A disaccharide + ATP = a lipid IVA + ADP + H(+). It functions in the pathway glycolipid biosynthesis; lipid IV(A) biosynthesis; lipid IV(A) from (3R)-3-hydroxytetradecanoyl-[acyl-carrier-protein] and UDP-N-acetyl-alpha-D-glucosamine: step 6/6. In terms of biological role, transfers the gamma-phosphate of ATP to the 4'-position of a tetraacyldisaccharide 1-phosphate intermediate (termed DS-1-P) to form tetraacyldisaccharide 1,4'-bis-phosphate (lipid IVA). This Paramagnetospirillum magneticum (strain ATCC 700264 / AMB-1) (Magnetospirillum magneticum) protein is Tetraacyldisaccharide 4'-kinase.